The chain runs to 67 residues: uncharacterized protein (67 aa).

Residues 12 to 34 (YYYAHQTVCITSTGFALCFVVQA) form a helical membrane-spanning segment.

It is found in the membrane. This is an uncharacterized protein from Saccharomyces cerevisiae (strain ATCC 204508 / S288c) (Baker's yeast).